The primary structure comprises 156 residues: MPRRRVIGQRKILPDPKFKSELLAKFVNIVMVDGKKSTAEKIVYGALDLMAEKSGKDHLAVFEEALENVRPAVEVKSRRVGGSTYQVPVEVRPVRRNALAMRWMVEAARKRGEKSMAQRLANEMLDASENKGTAVKKREDVHRMADANKAFAHYRW.

It belongs to the universal ribosomal protein uS7 family. As to quaternary structure, part of the 30S ribosomal subunit. Contacts proteins S9 and S11.

In terms of biological role, one of the primary rRNA binding proteins, it binds directly to 16S rRNA where it nucleates assembly of the head domain of the 30S subunit. Is located at the subunit interface close to the decoding center, probably blocks exit of the E-site tRNA. The polypeptide is Small ribosomal subunit protein uS7 (Aliivibrio fischeri (strain MJ11) (Vibrio fischeri)).